The sequence spans 390 residues: tRNA(Met) cytidine acetate ligase (390 aa).

Residues 7-20 (VVEY…HKLH), Gly101, Asn162, and Arg187 each bind ATP.

This sequence belongs to the TmcAL family.

Its subcellular location is the cytoplasm. It carries out the reaction cytidine(34) in elongator tRNA(Met) + acetate + ATP = N(4)-acetylcytidine(34) in elongator tRNA(Met) + AMP + diphosphate. Its function is as follows. Catalyzes the formation of N(4)-acetylcytidine (ac(4)C) at the wobble position of elongator tRNA(Met), using acetate and ATP as substrates. First activates an acetate ion to form acetyladenylate (Ac-AMP) and then transfers the acetyl group to tRNA to form ac(4)C34. This is tRNA(Met) cytidine acetate ligase from Listeria monocytogenes serotype 4b (strain F2365).